A 498-amino-acid polypeptide reads, in one-letter code: UDP-N-acetylmuramoyl-L-alanyl-D-glutamate--2,6-diaminopimelate ligase (498 aa).

Serine 29 provides a ligand contact to UDP-N-acetyl-alpha-D-muramoyl-L-alanyl-D-glutamate. An ATP-binding site is contributed by glycine 120–serine 126. UDP-N-acetyl-alpha-D-muramoyl-L-alanyl-D-glutamate-binding positions include threonine 162–threonine 163, serine 189, glutamine 195, and arginine 197. Lysine 229 is modified (N6-carboxylysine). Meso-2,6-diaminopimelate-binding positions include arginine 392, aspartate 416 to arginine 419, glycine 466, and glutamate 470. Residues aspartate 416–arginine 419 carry the Meso-diaminopimelate recognition motif motif.

This sequence belongs to the MurCDEF family. MurE subfamily. The cofactor is Mg(2+). Carboxylation is probably crucial for Mg(2+) binding and, consequently, for the gamma-phosphate positioning of ATP.

It is found in the cytoplasm. It catalyses the reaction UDP-N-acetyl-alpha-D-muramoyl-L-alanyl-D-glutamate + meso-2,6-diaminopimelate + ATP = UDP-N-acetyl-alpha-D-muramoyl-L-alanyl-gamma-D-glutamyl-meso-2,6-diaminopimelate + ADP + phosphate + H(+). Its pathway is cell wall biogenesis; peptidoglycan biosynthesis. In terms of biological role, catalyzes the addition of meso-diaminopimelic acid to the nucleotide precursor UDP-N-acetylmuramoyl-L-alanyl-D-glutamate (UMAG) in the biosynthesis of bacterial cell-wall peptidoglycan. This chain is UDP-N-acetylmuramoyl-L-alanyl-D-glutamate--2,6-diaminopimelate ligase, found in Alkalilimnicola ehrlichii (strain ATCC BAA-1101 / DSM 17681 / MLHE-1).